Here is a 349-residue protein sequence, read N- to C-terminus: N-formyl peptide receptor 3 (349 aa).

Topologically, residues 1–27 are extracellular; the sequence is METNFSIPLNESEEVLPEPAGHTVLWI. Asn4 and Asn10 each carry an N-linked (GlcNAc...) asparagine glycan. A helical membrane pass occupies residues 28–50; it reads FSLLVHGVTFIFGVLGNGLVIWV. Residues 51 to 61 are Cytoplasmic-facing; it reads AGFRMTRTVNT. A helical membrane pass occupies residues 62-83; it reads ICYLNLALADFSFSAILPFRMV. Residues 84-100 are Extracellular-facing; that stretch reads SVAMREKWPFGTFLCKL. An intrachain disulfide couples Cys98 to Cys176. The chain crosses the membrane as a helical span at residues 101 to 121; the sequence is VHVMIDINLFVSVYLITIIAL. The Cytoplasmic segment spans residues 122-140; that stretch reads DRCICVLHPAWAQNHRTMS. The chain crosses the membrane as a helical span at residues 141–162; it reads LAKRVMMGLWILAIVLTLPNFI. Topologically, residues 163 to 205 are extracellular; it reads FWTTISTKNGDTYCIFNFPFWGDTAVERLNAFITMGKVFLILH. A helical membrane pass occupies residues 206–226; sequence FIIGFSMPMSIITVCYGIIAA. Residues 227–242 are Cytoplasmic-facing; sequence KIHRNHMIKSSSPLRV. A helical transmembrane segment spans residues 243–266; sequence FAAVVASFFICWFPYELIGILMAV. The Extracellular segment spans residues 267 to 286; it reads WLKEMLLNGKYKIILVLLNP. Residues 287–306 form a helical membrane-spanning segment; it reads TSSLAFFNSCLNPILYVFLG. Over 307-349 the chain is Cytoplasmic; it reads SNFQERLIRSLPTSLERALTEVPDSAQTSNTHTNSASPPEETE. A disordered region spans residues 328–349; sequence VPDSAQTSNTHTNSASPPEETE. The segment covering 331 to 343 has biased composition (polar residues); the sequence is SAQTSNTHTNSAS.

This sequence belongs to the G-protein coupled receptor 1 family.

It is found in the cell membrane. Functionally, low affinity receptor for N-formyl-methionyl peptides, which are powerful neutrophils chemotactic factors. Binding of FMLP to the receptor causes activation of neutrophils. This response is mediated via a G-protein that activates a phosphatidylinositol-calcium second messenger system. In Pongo pygmaeus (Bornean orangutan), this protein is N-formyl peptide receptor 3 (FPR3).